Consider the following 314-residue polypeptide: NF-kappa-B inhibitor alpha (314 aa).

Residues 1 to 41 (MFQPAEPGQEWAMEGPRDALKKERLLDDRHDSGLDSMKDEE) are disordered. Residues 15-41 (GPRDALKKERLLDDRHDSGLDSMKDEE) show a composition bias toward basic and acidic residues. A Glycyl lysine isopeptide (Lys-Gly) (interchain with G-Cter in SUMO); alternate cross-link involves residue Lys-21. A Glycyl lysine isopeptide (Lys-Gly) (interchain with G-Cter in ubiquitin); alternate cross-link involves residue Lys-21. Lys-22 is covalently cross-linked (Glycyl lysine isopeptide (Lys-Gly) (interchain with G-Cter in ubiquitin)). The Destruction motif signature appears at 30–36 (HDSGLDS). Phosphoserine; by IKKA and IKKB is present on Ser-32. Ser-36 is modified (phosphoserine; by IKKA, IKKB, IKKE and TBK1). The residue at position 42 (Tyr-42) is a Phosphotyrosine; by Tyr-kinases. The short motif at 45-54 (MVKELREIRL) is the Nuclear export signal element. The Nuclear import signal motif lies at 110–120 (LQQTPLHLAVI). 4 ANK repeats span residues 110-139 (LQQT…DPEL), 143-172 (RGNT…TQHL), 182-211 (NGHT…DVNA), and 216-245 (NGRT…DVNR). Asn-210 and Asn-244 each carry (3S)-3-hydroxyasparagine; by HIF1AN. Phosphoserine; by CK2 occurs at positions 283 and 288. At Thr-291 the chain carries Phosphothreonine; by CK2. Ser-293 carries the phosphoserine; by CK2 modification. Thr-296 carries the phosphothreonine modification.

This sequence belongs to the NF-kappa-B inhibitor family. Interacts with RELA; the interaction requires the nuclear import signal. Part of a 70-90 kDa complex at least consisting of CHUK, IKBKB, NFKBIA, RELA, ELP1 and MAP3K14. Interacts with NKIRAS1 and NKIRAS2. Interacts with RWDD3; the interaction enhances sumoylation. Interacts with PRMT2. Interacts with PRKACA in platelets; this interaction is disrupted by thrombin and collagen. Interacts with MEFV. Interacts with DDRGK1; positively regulates NFKBIA phosphorylation and degradation. Interacts with HNRNPA2B1; the interaction may be mediated by the RRM2 domain of HNRNPA2B1, and HNRNPA2B1 may interact simultaneously with FAM76B and either NFKBIA or NFKBIE to form a complex. Phosphorylated at Ser-32 and Ser-36 by IKKA/CHUK and IKKB/IKBKB; disables inhibition of NF-kappa-B DNA-binding activity. Phosphorylation at positions 32 and 36 is prerequisite to recognition by the SCF(FBXW11) and SCF(BTRC) complexes, leading to polyubiquitination and subsequent degradation. Post-translationally, polyubiquitinated at Lys-21 and/or Lys-22 following phosphorylation at Ser-32 and Ser-36. Monoubiquitinated at Lys-21 and/or Lys-22 by UBE2D3. Ubiquitin chain elongation is then performed by CDC34 in cooperation with the SCF(FBXW11) E3 ligase complex, building ubiquitin chains from the UBE2D3-primed NFKBIA-linked ubiquitin. The resulting polyubiquitination leads to protein degradation. Also ubiquitinated by the SCF(BTRC) complex following stimulus-dependent phosphorylation at Ser-32 and Ser-36. Deubiquitinated by USP38, leading to NF-kappa-B inhibition. In terms of processing, sumoylated; sumoylation requires the presence of the nuclear import signal. Sumoylation blocks ubiquitination and proteasome-mediated degradation of the protein thereby increasing the protein stability. Hydroxylated by HIF1AN.

It is found in the cytoplasm. It localises to the nucleus. Its function is as follows. Inhibits the activity of dimeric NF-kappa-B/REL complexes by trapping REL (RELA/p65 and NFKB1/p50) dimers in the cytoplasm by masking their nuclear localization signals. On cellular stimulation by immune and pro-inflammatory responses, becomes phosphorylated promoting ubiquitination and degradation, enabling the dimeric RELA to translocate to the nucleus and activate transcription. The protein is NF-kappa-B inhibitor alpha (NFKBIA) of Sus scrofa (Pig).